The sequence spans 82 residues: Cytochrome b559 subunit alpha (82 aa).

Residues 21-35 form a helical membrane-spanning segment; sequence VIHSITIPALFIAGW. His-23 is a heme binding site.

This sequence belongs to the PsbE/PsbF family. As to quaternary structure, heterodimer of an alpha subunit and a beta subunit. PSII is composed of 1 copy each of membrane proteins PsbA, PsbB, PsbC, PsbD, PsbE, PsbF, PsbH, PsbI, PsbJ, PsbK, PsbL, PsbM, PsbT, PsbX, PsbY, PsbZ, Psb30/Ycf12, peripheral proteins PsbO, CyanoQ (PsbQ), PsbU, PsbV and a large number of cofactors. It forms dimeric complexes. Requires heme b as cofactor.

The protein localises to the cellular thylakoid membrane. Functionally, this b-type cytochrome is tightly associated with the reaction center of photosystem II (PSII). PSII is a light-driven water:plastoquinone oxidoreductase that uses light energy to abstract electrons from H(2)O, generating O(2) and a proton gradient subsequently used for ATP formation. It consists of a core antenna complex that captures photons, and an electron transfer chain that converts photonic excitation into a charge separation. The protein is Cytochrome b559 subunit alpha of Nostoc punctiforme (strain ATCC 29133 / PCC 73102).